The following is a 194-amino-acid chain: 7-methyl-GTP pyrophosphatase (194 aa).

The active-site Proton acceptor is the Asp67.

This sequence belongs to the Maf family. YceF subfamily. The cofactor is a divalent metal cation.

It localises to the cytoplasm. It carries out the reaction N(7)-methyl-GTP + H2O = N(7)-methyl-GMP + diphosphate + H(+). Its function is as follows. Nucleoside triphosphate pyrophosphatase that hydrolyzes 7-methyl-GTP (m(7)GTP). May have a dual role in cell division arrest and in preventing the incorporation of modified nucleotides into cellular nucleic acids. In Pseudoalteromonas atlantica (strain T6c / ATCC BAA-1087), this protein is 7-methyl-GTP pyrophosphatase.